The chain runs to 151 residues: 3-hydroxyacyl-[acyl-carrier-protein] dehydratase FabZ (151 aa).

His-54 is an active-site residue.

The protein belongs to the thioester dehydratase family. FabZ subfamily.

The protein resides in the cytoplasm. It catalyses the reaction a (3R)-hydroxyacyl-[ACP] = a (2E)-enoyl-[ACP] + H2O. Its function is as follows. Involved in unsaturated fatty acids biosynthesis. Catalyzes the dehydration of short chain beta-hydroxyacyl-ACPs and long chain saturated and unsaturated beta-hydroxyacyl-ACPs. The protein is 3-hydroxyacyl-[acyl-carrier-protein] dehydratase FabZ of Salmonella agona (strain SL483).